The following is a 141-amino-acid chain: Hemoglobin subunit alpha-A (141 aa).

Residues 1-141 (VLSGTDKTNV…VGAVLTAKYR (141 aa)) enclose the Globin domain. His-58 is an O2 binding site. Residue His-87 coordinates heme b.

The protein belongs to the globin family. Heterotetramer of two alpha chains and two beta chains. As to expression, red blood cells.

Functionally, involved in oxygen transport from the lung to the various peripheral tissues. In Struthio camelus (Common ostrich), this protein is Hemoglobin subunit alpha-A (HBAA).